Consider the following 102-residue polypeptide: Large ribosomal subunit protein bL21 (102 aa).

The protein belongs to the bacterial ribosomal protein bL21 family. Part of the 50S ribosomal subunit. Contacts protein L20.

Functionally, this protein binds to 23S rRNA in the presence of protein L20. This Onion yellows phytoplasma (strain OY-M) protein is Large ribosomal subunit protein bL21.